We begin with the raw amino-acid sequence, 170 residues long: Microfibrillar-associated protein 5 (170 aa).

The signal sequence occupies residues 1-20 (MTFFGPKVLLLLTALIMSSG). Residues 30-32 (RGD) carry the Cell attachment site motif. A glycan (N-linked (GlcNAc...) asparagine) is linked at asparagine 76.

The protein belongs to the MFAP family. In terms of assembly, interacts with TGFB2. Interacts with BMP2. Interacts with FBN1 (via N-terminal domain) and FBN2. Post-translationally, forms intermolecular disulfide bonds either with other MAGP-2 molecules or with other components of the microfibrils. As to expression, associated with fibrillin-containing microfibrils of the developing nuchal ligament.

The protein resides in the secreted. Its subcellular location is the extracellular space. It localises to the extracellular matrix. Its function is as follows. May play a role in hematopoiesis. In the cardiovascular system, could regulate growth factors or participate in cell signaling in maintaining large vessel integrity. Component of the elastin-associated microfibrils. This Bos taurus (Bovine) protein is Microfibrillar-associated protein 5 (MFAP5).